The following is a 212-amino-acid chain: Metalloproteinase inhibitor 3 (212 aa).

The first 24 residues, 1-24 (MTAWLGFLAVFLCSWSLRDLVAEA), serve as a signal peptide directing secretion. Position 25 (Cys25) interacts with Zn(2+). 2 involved in metalloproteinase-binding regions span residues 25–28 (CTCV) and 89–90 (ES). 6 disulfides stabilise this stretch: Cys25–Cys92, Cys27–Cys119, Cys37–Cys144, Cys146–Cys193, Cys151–Cys156, and Cys164–Cys185. The NTR domain maps to 25-144 (CTCVPIHPQD…GLNHRYHLGC (120 aa)).

Belongs to the protease inhibitor I35 (TIMP) family.

The protein resides in the secreted. Its subcellular location is the extracellular space. It localises to the extracellular matrix. In terms of biological role, complexes with metalloproteinases (such as collagenases) and irreversibly inactivates them by binding to their catalytic zinc cofactor. May form part of a tissue-specific acute response to remodeling stimuli. The protein is Metalloproteinase inhibitor 3 (TIMP3) of Gallus gallus (Chicken).